We begin with the raw amino-acid sequence, 429 residues long: Ribosomal protein uS12 methylthiotransferase RimO (429 aa).

Positions 2-118 constitute an MTTase N-terminal domain; the sequence is HNIFLLSLGC…VLRAIGAEYR (117 aa). [4Fe-4S] cluster is bound by residues Cys-11, Cys-47, Cys-81, Cys-142, Cys-146, and Cys-149. The region spanning 128-357 is the Radical SAM core domain; sequence LTPPHYAFLK…MELQETISQE (230 aa). The region spanning 360–427 is the TRAM domain; that stretch reads REFEGNEIVV…PYDLEGEVIG (68 aa).

Belongs to the methylthiotransferase family. RimO subfamily. It depends on [4Fe-4S] cluster as a cofactor.

The protein localises to the cytoplasm. The enzyme catalyses L-aspartate(89)-[ribosomal protein uS12]-hydrogen + (sulfur carrier)-SH + AH2 + 2 S-adenosyl-L-methionine = 3-methylsulfanyl-L-aspartate(89)-[ribosomal protein uS12]-hydrogen + (sulfur carrier)-H + 5'-deoxyadenosine + L-methionine + A + S-adenosyl-L-homocysteine + 2 H(+). Catalyzes the methylthiolation of an aspartic acid residue of ribosomal protein uS12. This chain is Ribosomal protein uS12 methylthiotransferase RimO, found in Chlorobium limicola (strain DSM 245 / NBRC 103803 / 6330).